The chain runs to 160 residues: S-ribosylhomocysteine lyase (160 aa).

The Fe cation site is built by His-57, His-61, and Cys-127.

The protein belongs to the LuxS family. Homodimer. It depends on Fe cation as a cofactor.

It catalyses the reaction S-(5-deoxy-D-ribos-5-yl)-L-homocysteine = (S)-4,5-dihydroxypentane-2,3-dione + L-homocysteine. Functionally, involved in the synthesis of autoinducer 2 (AI-2) which is secreted by bacteria and is used to communicate both the cell density and the metabolic potential of the environment. The regulation of gene expression in response to changes in cell density is called quorum sensing. Catalyzes the transformation of S-ribosylhomocysteine (RHC) to homocysteine (HC) and 4,5-dihydroxy-2,3-pentadione (DPD). This Streptococcus sanguinis (strain SK36) protein is S-ribosylhomocysteine lyase.